Here is an 88-residue protein sequence, read N- to C-terminus: Protein transport protein Sec61 subunit beta (88 aa).

Residues methionine 1 to serine 41 form a disordered region. Over methionine 1 to proline 60 the chain is Cytoplasmic. The helical transmembrane segment at leucine 61–alanine 81 threads the bilayer.

The protein belongs to the SEC61-beta family. As to quaternary structure, heterotrimeric complex composed of SEC61, SEB1 and SSS1.

Its subcellular location is the endoplasmic reticulum membrane. Functionally, necessary for protein translocation in the endoplasmic reticulum. The chain is Protein transport protein Sec61 subunit beta (SBH1) from Kluyveromyces lactis (strain ATCC 8585 / CBS 2359 / DSM 70799 / NBRC 1267 / NRRL Y-1140 / WM37) (Yeast).